The sequence spans 144 residues: Deoxyuridine 5'-triphosphate nucleotidohydrolase (144 aa).

Substrate-binding positions include R63–G65, N76, and T80–D82.

Belongs to the dUTPase family. Requires Mg(2+) as cofactor.

The enzyme catalyses dUTP + H2O = dUMP + diphosphate + H(+). It functions in the pathway pyrimidine metabolism; dUMP biosynthesis; dUMP from dCTP (dUTP route): step 2/2. Functionally, this enzyme is involved in nucleotide metabolism: it produces dUMP, the immediate precursor of thymidine nucleotides and it decreases the intracellular concentration of dUTP so that uracil cannot be incorporated into DNA. The protein is Deoxyuridine 5'-triphosphate nucleotidohydrolase of Porphyromonas gingivalis (strain ATCC BAA-308 / W83).